We begin with the raw amino-acid sequence, 111 residues long: MQRIKKGDKVVVITGKNKGGSGIVLKIMPARQQAIVEGLNKVTRHKKKDQTTKRAAKQSTGKVQQEAPIFLSKLALFDQKAKQQTIGKIKYVMDPKTNKKTRVFKKSNNTL.

The segment at Thr43–Lys62 is disordered.

It belongs to the universal ribosomal protein uL24 family. Part of the 50S ribosomal subunit.

One of two assembly initiator proteins, it binds directly to the 5'-end of the 23S rRNA, where it nucleates assembly of the 50S subunit. Its function is as follows. One of the proteins that surrounds the polypeptide exit tunnel on the outside of the subunit. The sequence is that of Large ribosomal subunit protein uL24 from Mycoplasma pneumoniae (strain ATCC 29342 / M129 / Subtype 1) (Mycoplasmoides pneumoniae).